The primary structure comprises 93 residues: UPF0367 protein gsr3177 (93 aa).

Belongs to the UPF0367 family.

The sequence is that of UPF0367 protein gsr3177 from Gloeobacter violaceus (strain ATCC 29082 / PCC 7421).